The following is a 465-amino-acid chain: NADH-quinone oxidoreductase subunit N (465 aa).

Transmembrane regions (helical) follow at residues 9-29, 44-64, 73-93, 110-130, 159-179, 198-218, 235-255, 265-285, 292-312, 327-347, 371-391, 405-427, and 444-464; these read FNFV…VLLL, ASII…GFVL, LFVS…FSML, FLFM…IVIF, YFTL…FVYL, PILL…LSIA, FIAF…LRIF, EYIV…VALI, MLAY…VSSM, IFAL…IFLI, IMLA…IFWG, YALV…KILI, and VKQK…VFLL.

It belongs to the complex I subunit 2 family. As to quaternary structure, NDH-1 is composed of 14 different subunits. Subunits NuoA, H, J, K, L, M, N constitute the membrane sector of the complex.

Its subcellular location is the cell inner membrane. It catalyses the reaction a quinone + NADH + 5 H(+)(in) = a quinol + NAD(+) + 4 H(+)(out). Functionally, NDH-1 shuttles electrons from NADH, via FMN and iron-sulfur (Fe-S) centers, to quinones in the respiratory chain. The immediate electron acceptor for the enzyme in this species is believed to be ubiquinone. Couples the redox reaction to proton translocation (for every two electrons transferred, four hydrogen ions are translocated across the cytoplasmic membrane), and thus conserves the redox energy in a proton gradient. The polypeptide is NADH-quinone oxidoreductase subunit N (Campylobacter lari (strain RM2100 / D67 / ATCC BAA-1060)).